Here is a 976-residue protein sequence, read N- to C-terminus: Peptidylglycine alpha-amidating monooxygenase (976 aa).

The first 25 residues, methionine 1–alanine 25, serve as a signal peptide directing secretion. Positions methionine 1–glycine 497 are peptidylglycine alpha-hydroxylating monooxygenase. The propeptide occupies phenylalanine 26–arginine 35. Residues phenylalanine 36–glycine 866 are Intragranular-facing. 5 disulfides stabilise this stretch: cysteine 47/cysteine 186, cysteine 81/cysteine 126, cysteine 114/cysteine 131, cysteine 227/cysteine 334, and cysteine 293/cysteine 315. The Cu(2+) site is built by histidine 107 and histidine 108. Cu(2+) contacts are provided by histidine 172, histidine 242, histidine 244, and methionine 314. The tract at residues aspartate 498–valine 820 is peptidyl-alpha-hydroxyglycine alpha-amidating lyase. NHL repeat units follow at residues valine 501 to aspartate 544, alanine 570 to histidine 611, leucine 620 to serine 665, and glycine 673 to aspartate 717. Valine 520 lines the Ca(2+) pocket. Arginine 533 serves as a coordination point for a protein. Histidine 585 contributes to the Zn(2+) binding site. Leucine 587 is a binding site for Ca(2+). Cysteine 634 and cysteine 655 are oxidised to a cystine. Tyrosine 654 lines the a protein pocket. Histidine 690 serves as a coordination point for Zn(2+). Cysteine 702 and cysteine 713 form a disulfide bridge. Position 706 (arginine 706) interacts with a protein. Asparagine 765 is a glycosylation site (N-linked (GlcNAc...) asparagine). The stretch at glycine 769–threonine 812 is one NHL 5 repeat. Valine 774 carries the sulfotyrosine modification. Histidine 786 is a binding site for Zn(2+). Residue aspartate 787 coordinates Ca(2+). Residue glutamate 792 is modified to Sulfotyrosine. Residues valine 867–isoleucine 890 form a helical membrane-spanning segment. The Cytoplasmic segment spans residues arginine 891 to serine 976. 3 positions are modified to phosphoserine: serine 921, serine 932, and serine 945. Residues asparagine 928–serine 945 form an interaction with RASSF9 region. Residues glycine 940–serine 976 form a disordered region. At threonine 946 the chain carries Phosphothreonine. Serine 949 bears the Phosphoserine mark. A compositionally biased stretch (acidic residues) spans glutamate 952–tyrosine 965. Threonine 959 is subject to Phosphothreonine. Serine 961 is subject to Phosphoserine.

It in the C-terminal section; belongs to the peptidyl-alpha-hydroxyglycine alpha-amidating lyase family. In the N-terminal section; belongs to the copper type II ascorbate-dependent monooxygenase family. As to quaternary structure, monomer. Interacts with RASSF9. Requires Zn(2+) as cofactor. It depends on Cu(2+) as a cofactor.

The protein resides in the cytoplasmic vesicle. The protein localises to the secretory vesicle membrane. Its subcellular location is the membrane. It is found in the secreted. It catalyses the reaction a [peptide]-C-terminal glycine + 2 L-ascorbate + O2 = a [peptide]-C-terminal (2S)-2-hydroxyglycine + 2 monodehydro-L-ascorbate radical + H2O. It carries out the reaction a [peptide]-C-terminal (2S)-2-hydroxyglycine = a [peptide]-C-terminal amide + glyoxylate. The catalysed reaction is N-dodecanoylglycine + 2 L-ascorbate + O2 = N-dodecanoyl-(2S)-hydroxyglycine + 2 monodehydro-L-ascorbate radical + H2O. The enzyme catalyses N-dodecanoyl-(2S)-hydroxyglycine = dodecanamide + glyoxylate. It catalyses the reaction N-(9Z,12Z,15Z)-octadecatrienoylglycine + 2 L-ascorbate + O2 = N-(9Z,12Z,15Z)-octadecatrienoyl-(2S)-hydroxyglycine + 2 monodehydro-L-ascorbate radical + H2O. It carries out the reaction N-(9Z,12Z,15Z)-octadecatrienoyl-(2S)-hydroxyglycine = (9Z,12Z,15Z)-octadecatrienamide + glyoxylate. The catalysed reaction is N-(9Z-octadecenoyl)glycine + 2 L-ascorbate + O2 = N-(9Z-octadecenoyl)-(2S)-hydroxyglycine + 2 monodehydro-L-ascorbate radical + H2O. The enzyme catalyses N-(9Z-octadecenoyl)-(2S)-hydroxyglycine = (9Z)-octadecenamide + glyoxylate. It catalyses the reaction N-tetradecanoylglycine + 2 L-ascorbate + O2 = N-tetradecanoyl-(2S)-hydroxyglycine + 2 monodehydro-L-ascorbate radical + H2O. It carries out the reaction N-tetradecanoyl-(2S)-hydroxyglycine = tetradecamide + glyoxylate. The catalysed reaction is N-decanoylglycine + 2 L-ascorbate + O2 = N-decanoyl-(2S)-hydroxyglycine + 2 monodehydro-L-ascorbate radical + H2O. The enzyme catalyses N-decanoyl-(2S)-hydroxyglycine = decanamide + glyoxylate. It catalyses the reaction N-octanoylglycine + 2 L-ascorbate + O2 = N-octanoyl-(2S)-hydroxyglycine + 2 monodehydro-L-ascorbate radical + H2O. It carries out the reaction N-octanoyl-(2S)-hydroxyglycine = octanamide + glyoxylate. Its activity is regulated as follows. PAM activity is inhibited by EDTA, phenylglyoxal and diethyl pyrocarbonate. PAL activity is stimulated by cadmium and inhibited by mercury. Functionally, bifunctional enzyme that catalyzes amidation of the C-terminus of proteins. Alpha-amidation is present at the C-terminus of many endocrine hormones and neuropeptides and is required for their activity. C-terminal amidation also takes place in response to protein fragmentation triggered by oxidative stress, promoting degradation of amidated protein fragments by the proteasome. Alpha-amidation involves two sequential reactions, both of which are catalyzed by separate catalytic domains of the enzyme. The first step, catalyzed by peptidyl alpha-hydroxylating monooxygenase (PHM) domain, is the copper-, ascorbate-, and O2- dependent stereospecific hydroxylation (with S stereochemistry) at the alpha-carbon (C-alpha) of the C-terminal glycine of the peptidylglycine substrate. The second step, catalyzed by the peptidylglycine amidoglycolate lyase (PAL) domain, is the zinc-dependent cleavage of the N-C-alpha bond, producing the alpha-amidated peptide and glyoxylate. Similarly, catalyzes the two-step conversion of an N-fatty acylglycine to a primary fatty acid amide and glyoxylate. This Rattus norvegicus (Rat) protein is Peptidylglycine alpha-amidating monooxygenase.